The sequence spans 334 residues: Probable tRNA pseudouridine synthase B (334 aa).

Aspartate 82 serves as the catalytic Nucleophile. A PUA domain is found at 250 to 325 (LPKIWIKDSA…IAVDVEKVFM (76 aa)).

The protein belongs to the pseudouridine synthase TruB family. Type 2 subfamily.

The catalysed reaction is uridine(55) in tRNA = pseudouridine(55) in tRNA. Could be responsible for synthesis of pseudouridine from uracil-55 in the psi GC loop of transfer RNAs. The chain is Probable tRNA pseudouridine synthase B from Pyrococcus abyssi (strain GE5 / Orsay).